Consider the following 589-residue polypeptide: tRNA (guanine(26)-N(2))-dimethyltransferase 2 (589 aa).

Residues threonine 9–methionine 465 form the Trm1 methyltransferase domain. S-adenosyl-L-methionine is bound at residue arginine 36. The segment at lysine 51–proline 122 is disordered. Basic and acidic residues-rich tracts occupy residues valine 68 to threonine 81 and aspartate 106 to proline 122. 3 residues coordinate S-adenosyl-L-methionine: arginine 134, aspartate 152, and valine 185. 4 residues coordinate Zn(2+): cysteine 315, cysteine 318, cysteine 350, and cysteine 353. Positions leucine 550–threonine 589 are disordered. Residues lysine 558 to asparagine 569 are compositionally biased toward acidic residues.

This sequence belongs to the class I-like SAM-binding methyltransferase superfamily. Trm1 family.

The catalysed reaction is guanosine(26) in tRNA + 2 S-adenosyl-L-methionine = N(2)-dimethylguanosine(26) in tRNA + 2 S-adenosyl-L-homocysteine + 2 H(+). Functionally, dimethylates a single guanine residue at position 26 of most tRNAs using S-adenosyl-L-methionine as donor of the methyl groups. In Arabidopsis thaliana (Mouse-ear cress), this protein is tRNA (guanine(26)-N(2))-dimethyltransferase 2.